Here is a 150-residue protein sequence, read N- to C-terminus: D-aminoacyl-tRNA deacylase (150 aa).

The Gly-cisPro motif, important for rejection of L-amino acids motif lies at 138–139 (GP).

Belongs to the DTD family. In terms of assembly, homodimer.

It is found in the cytoplasm. The enzyme catalyses glycyl-tRNA(Ala) + H2O = tRNA(Ala) + glycine + H(+). It carries out the reaction a D-aminoacyl-tRNA + H2O = a tRNA + a D-alpha-amino acid + H(+). An aminoacyl-tRNA editing enzyme that deacylates mischarged D-aminoacyl-tRNAs. Also deacylates mischarged glycyl-tRNA(Ala), protecting cells against glycine mischarging by AlaRS. Acts via tRNA-based rather than protein-based catalysis; rejects L-amino acids rather than detecting D-amino acids in the active site. By recycling D-aminoacyl-tRNA to D-amino acids and free tRNA molecules, this enzyme counteracts the toxicity associated with the formation of D-aminoacyl-tRNA entities in vivo and helps enforce protein L-homochirality. This Opitutus terrae (strain DSM 11246 / JCM 15787 / PB90-1) protein is D-aminoacyl-tRNA deacylase.